Reading from the N-terminus, the 815-residue chain is Lon protease 1 (815 aa).

The Lon N-terminal domain maps to 19 to 212 (MPLLPLRDIV…KLFGQIRSEI (194 aa)). 364–371 (GPPGVGKT) is an ATP binding site. The region spanning 601 to 782 (KDEIGLAVGL…DDVLRKAMVV (182 aa)) is the Lon proteolytic domain. Active-site residues include serine 688 and lysine 731. The interval 793–815 (EAGAQQAVMFEQKPPAADEIRAH) is disordered.

Belongs to the peptidase S16 family. As to quaternary structure, homohexamer. Organized in a ring with a central cavity.

The protein resides in the cytoplasm. It carries out the reaction Hydrolysis of proteins in presence of ATP.. ATP-dependent serine protease that mediates the selective degradation of mutant and abnormal proteins as well as certain short-lived regulatory proteins. Required for cellular homeostasis and for survival from DNA damage and developmental changes induced by stress. Degrades polypeptides processively to yield small peptide fragments that are 5 to 10 amino acids long. Binds to DNA in a double-stranded, site-specific manner. This chain is Lon protease 1, found in Syntrophobacter fumaroxidans (strain DSM 10017 / MPOB).